Consider the following 156-residue polypeptide: Cellulose synthase operon protein D (156 aa).

The protein operates within glycan metabolism; bacterial cellulose biosynthesis. May have a major role in the perfection of crystallization, involved either in the pore structure itself or in the organization of the pores within the linear array of terminal synthesizing complexes (TCs). The polypeptide is Cellulose synthase operon protein D (Komagataeibacter sucrofermentans (strain ATCC 700178 / DSM 15973 / CECT 7291 / JCM 9730 / LMG 18788 / BPR 2001) (Acetobacter xylinus subsp. sucrofermentans)).